Here is a 169-residue protein sequence, read N- to C-terminus: Regulator of sigma D (169 aa).

Belongs to the Rsd/AlgQ family. As to quaternary structure, interacts with RpoD.

It is found in the cytoplasm. Binds RpoD and negatively regulates RpoD-mediated transcription activation by preventing the interaction between the primary sigma factor RpoD with the catalytic core of the RNA polymerase and with promoter DNA. May be involved in replacement of the RNA polymerase sigma subunit from RpoD to RpoS during the transition from exponential growth to the stationary phase. This is Regulator of sigma D from Yersinia pestis.